We begin with the raw amino-acid sequence, 176 residues long: MDLPGPIHEILMLFGGFVLLLGGLGVVLLTNPIYSAFSLGLVLVCISLFYFLLNSYFVAVAQLLIYVGAINVLIIFAVMFVNGSEWSKDKNYWTIGDGFTSIVCITIVFSLMTTIPDTSWYGILWTTRSNQIVEQGLINNVQQIGIHLATDFYLPFELISIILLVSLIGAITMARQ.

5 helical membrane-spanning segments follow: residues 10-30 (ILML…VLLT), 33-53 (IYSA…YFLL), 60-80 (VAQL…AVMF), 95-115 (IGDG…MTTI), and 152-172 (FYLP…GAIT).

This sequence belongs to the complex I subunit 6 family. As to quaternary structure, NDH is composed of at least 16 different subunits, 5 of which are encoded in the nucleus.

It is found in the plastid. It localises to the chloroplast thylakoid membrane. It catalyses the reaction a plastoquinone + NADH + (n+1) H(+)(in) = a plastoquinol + NAD(+) + n H(+)(out). The enzyme catalyses a plastoquinone + NADPH + (n+1) H(+)(in) = a plastoquinol + NADP(+) + n H(+)(out). Functionally, NDH shuttles electrons from NAD(P)H:plastoquinone, via FMN and iron-sulfur (Fe-S) centers, to quinones in the photosynthetic chain and possibly in a chloroplast respiratory chain. The immediate electron acceptor for the enzyme in this species is believed to be plastoquinone. Couples the redox reaction to proton translocation, and thus conserves the redox energy in a proton gradient. This chain is NAD(P)H-quinone oxidoreductase subunit 6, chloroplastic (ndhG), found in Lolium perenne (Perennial ryegrass).